The sequence spans 181 residues: ATP-dependent protease subunit HslV (181 aa).

The active site involves threonine 7. Residues glycine 166, cysteine 169, and threonine 172 each contribute to the Na(+) site.

The protein belongs to the peptidase T1B family. HslV subfamily. As to quaternary structure, a double ring-shaped homohexamer of HslV is capped on each side by a ring-shaped HslU homohexamer. The assembly of the HslU/HslV complex is dependent on binding of ATP.

The protein resides in the cytoplasm. It carries out the reaction ATP-dependent cleavage of peptide bonds with broad specificity.. Allosterically activated by HslU binding. Protease subunit of a proteasome-like degradation complex believed to be a general protein degrading machinery. The chain is ATP-dependent protease subunit HslV from Variovorax paradoxus (strain S110).